A 125-amino-acid chain; its full sequence is UPF0102 protein PBPRA3228 (125 aa).

This sequence belongs to the UPF0102 family.

The protein is UPF0102 protein PBPRA3228 of Photobacterium profundum (strain SS9).